The sequence spans 1235 residues: Gem-associated protein 5 (1235 aa).

One copy of the WD 1 repeat lies at serine 55–glycine 102. Residues asparagine 227–aspartate 263 form a disordered region. Residues glutamate 234–lysine 248 show a composition bias toward basic and acidic residues. Residues serine 289, serine 290, serine 351, and serine 354 each carry the phosphoserine modification. Residues aspartate 340 to glycine 368 form a disordered region. Positions aspartate 352–glycine 368 are enriched in polar residues. Threonine 355 carries the phosphothreonine modification. Residue serine 357 is modified to Phosphoserine. Threonine 411 bears the Phosphothreonine mark. 7 WD repeats span residues isoleucine 428 to lysine 469, lysine 475 to arginine 512, threonine 565 to leucine 605, tyrosine 611 to histidine 650, threonine 690 to tryptophan 730, leucine 739 to lysine 779, and threonine 788 to leucine 828. Residues leucine 443–leucine 447 carry the LXXLL motif motif. A compositionally biased stretch (basic and acidic residues) spans lysine 963–serine 980. The segment at lysine 963 to serine 983 is disordered.

Component of the core survival motor neuron (SMN) complex composed of Smn, Gem2, Gem3, rig/Gem5 and one of 3 almost identical Gem4 paralogs encoded by Glos/Gem4a, Gem4b or Gem4c. Interacts with nuclear receptors EcR, svp (seven up), usp (ultraspiracle), Hr39 and Hr3. Expressed in the brain and salivary glands of early and late second instar larvae. Expressed in nurse cells and oocytes.

It is found in the nucleus. Its subcellular location is the cytoplasm. It localises to the U-body. The protein localises to the gem. Its function is as follows. Component of the survival motor neuron (SMN) complex that catalyzes the assembly of small nuclear ribonucleoproteins (snRNPs), the building blocks of the spliceosome, and thereby plays an important role in the splicing of cellular pre-mRNAs. Nuclear receptor cofactor for the ecdysone-regulated processes of molting and puparium formation. Acts downstream from ecdysone biosynthesis and release to control the expression of specific ecdysone-regulated genes such as Eip74EF (E74). Essential in muscle and neuronal tissues for motor function, including climbing ability and flight. In Drosophila melanogaster (Fruit fly), this protein is Gem-associated protein 5.